The primary structure comprises 493 residues: Probable cytosol aminopeptidase (493 aa).

Mn(2+) is bound by residues lysine 257 and aspartate 262. Lysine 269 is a catalytic residue. Residues aspartate 280, aspartate 339, and glutamate 341 each coordinate Mn(2+). Arginine 343 is a catalytic residue.

It belongs to the peptidase M17 family. Mn(2+) is required as a cofactor.

The protein localises to the cytoplasm. It catalyses the reaction Release of an N-terminal amino acid, Xaa-|-Yaa-, in which Xaa is preferably Leu, but may be other amino acids including Pro although not Arg or Lys, and Yaa may be Pro. Amino acid amides and methyl esters are also readily hydrolyzed, but rates on arylamides are exceedingly low.. It carries out the reaction Release of an N-terminal amino acid, preferentially leucine, but not glutamic or aspartic acids.. Its function is as follows. Presumably involved in the processing and regular turnover of intracellular proteins. Catalyzes the removal of unsubstituted N-terminal amino acids from various peptides. In Aquifex aeolicus (strain VF5), this protein is Probable cytosol aminopeptidase (pepA).